A 217-amino-acid chain; its full sequence is PRELI domain-containing protein 1, mitochondrial (217 aa).

The region spanning 36–174 (TEDIVHREVT…ILAKLQGEAP (139 aa)) is the PRELI/MSF1 domain.

In terms of assembly, forms a complex with TRIAP1 in the mitochondrion intermembrane space. Interacts with OPA1 and AIFM1. In terms of tissue distribution, abundantly expressed in all tissues tested except testis with highest levels in thymus.

It localises to the mitochondrion. The protein localises to the mitochondrion intermembrane space. It catalyses the reaction a 1,2-diacyl-sn-glycero-3-phosphate(in) = a 1,2-diacyl-sn-glycero-3-phosphate(out). Involved in the modulation of the mitochondrial apoptotic pathway by ensuring the accumulation of cardiolipin (CL) in mitochondrial membranes. In vitro, the TRIAP1:PRELID1 complex mediates the transfer of phosphatidic acid (PA) between liposomes and probably functions as a PA transporter across the mitochondrion intermembrane space to provide PA for CL synthesis in the inner membrane. Regulates the mitochondrial apoptotic pathway in primary Th cells. Regulates Th cell differentiation by down-regulating STAT6 thereby reducing IL-4-induced Th2 cell number. May be important for the development of vital and immunocompetent organs. This chain is PRELI domain-containing protein 1, mitochondrial (Prelid1), found in Mus musculus (Mouse).